A 419-amino-acid chain; its full sequence is Mitogen-activated protein kinase spm1 (419 aa).

The region spanning 23–314 (YTVTKELGQG…VEEALEHPYL (292 aa)) is the Protein kinase domain. Residues 29–37 (LGQGAYGIV) and Lys52 each bind ATP. Asp149 serves as the catalytic Proton acceptor.

The protein belongs to the protein kinase superfamily. Ser/Thr protein kinase family. MAP kinase subfamily. Mg(2+) serves as cofactor. Post-translationally, phosphorylated by the MAP kinase kinase mkk1.

It carries out the reaction L-seryl-[protein] + ATP = O-phospho-L-seryl-[protein] + ADP + H(+). The enzyme catalyses L-threonyl-[protein] + ATP = O-phospho-L-threonyl-[protein] + ADP + H(+). In terms of biological role, mitogen-activated protein kinase, part of the mkh1-mkk1-spm1 MAPK cascade that regulates vegetative growth, conidial formation, colony surface hydrophobicity, osmotic stress, cell wall integrity maintenance, carbon and nitrogen source utilization, chitin distribution, septa formation, and pathogenicity. The chain is Mitogen-activated protein kinase spm1 from Cytospora mali (Apple Valsa canker fungus).